Here is a 1284-residue protein sequence, read N- to C-terminus: Putative late blight resistance protein homolog R1B-16 (1284 aa).

The stretch at 533–555 forms a coiled coil; it reads PRMNEEIVGFKDVIENLRNQLLN. Residues 534–821 form the NB-ARC domain; the sequence is RMNEEIVGFK…SESFIKSSEG (288 aa). An ATP-binding site is contributed by 567-574; the sequence is GMPGLGKT. 8 LRR repeats span residues 942-966, 985-1010, 1013-1036, 1085-1107, 1108-1135, 1159-1181, 1182-1206, and 1219-1243; these read FKFLKVLDLEHQVVIDSIPTELFYL, LWNLETLILKHVSRCTVLLPSTVWDM, LRHLHIPNFRPENEEALLENSAKL, PIRLEILKLYRSKAFNTIPFCIS, APNLKYLKLSRSYMDSQYLSETADHLKN, FPQLKILKLEYLALMKWIVADDA, FPNLEQLVLHECRHLMEIPSCFMDI, and ESVVKSAMNIQETQVEDYQNTNFKL. Residues 1217–1284 form the HMA domain; the sequence is CNESVVKSAM…VEKQRKRGML (68 aa).

It belongs to the disease resistance NB-LRR family.

It localises to the cytoplasm. The protein resides in the membrane. In terms of biological role, confers resistance to late blight (Phytophthora infestans) races carrying the avirulence gene Avr1. Resistance proteins guard the plant against pathogens that contain an appropriate avirulence protein via an indirect interaction with this avirulence protein. That triggers a defense system including the hypersensitive response, which restricts the pathogen growth. This is Putative late blight resistance protein homolog R1B-16 (R1B-16) from Solanum demissum (Wild potato).